The chain runs to 72 residues: Translational regulator CsrA (72 aa).

This sequence belongs to the CsrA/RsmA family. As to quaternary structure, homodimer; the beta-strands of each monomer intercalate to form a hydrophobic core, while the alpha-helices form wings that extend away from the core.

Its subcellular location is the cytoplasm. A translational regulator that binds mRNA to regulate translation initiation and/or mRNA stability. Usually binds in the 5'-UTR at or near the Shine-Dalgarno sequence preventing ribosome-binding, thus repressing translation. Its main target seems to be the major flagellin gene, while its function is anatagonized by FliW. This is Translational regulator CsrA from Clostridium botulinum (strain Loch Maree / Type A3).